We begin with the raw amino-acid sequence, 129 residues long: MAKEKTRVKRKERKNISSGVAHVNSTFNNTMITIADAQGNAISWSSAGLMGFKGSRKSTPFAAQMAAEDAGKKAMEHGMRTLEVEVCGPGSGRESALRALQSVGFTVTTIRDVTPIPHNGCRPPKRRRV.

This sequence belongs to the universal ribosomal protein uS11 family. As to quaternary structure, part of the 30S ribosomal subunit. Interacts with proteins S7 and S18. Binds to IF-3.

Its function is as follows. Located on the platform of the 30S subunit, it bridges several disparate RNA helices of the 16S rRNA. Forms part of the Shine-Dalgarno cleft in the 70S ribosome. In Parvibaculum lavamentivorans (strain DS-1 / DSM 13023 / NCIMB 13966), this protein is Small ribosomal subunit protein uS11.